Here is a 602-residue protein sequence, read N- to C-terminus: Adenylosuccinate synthetase (602 aa).

Residues 74–80 (GDEGKGK) and 104–106 (GHT) contribute to the GTP site. D75 (proton acceptor) is an active-site residue. Mg(2+)-binding residues include D75 and G104. IMP contacts are provided by residues 75-78 (DEGK), 102-105 (NAGH), T189, K203, Q315, T331, and K459. The active-site Proton donor is the H105. 455 to 461 (AVTKKPR) serves as a coordination point for substrate. Residues R461 and 589-591 (GNG) contribute to the GTP site.

This sequence belongs to the adenylosuccinate synthetase family. As to quaternary structure, homodimer. The cofactor is Mg(2+).

It is found in the cytoplasm. The catalysed reaction is IMP + L-aspartate + GTP = N(6)-(1,2-dicarboxyethyl)-AMP + GDP + phosphate + 2 H(+). Its pathway is purine metabolism; AMP biosynthesis via de novo pathway; AMP from IMP: step 1/2. Functionally, plays an important role in the salvage pathway for purine nucleotide biosynthesis. Catalyzes the first committed step in the biosynthesis of AMP from IMP. The protein is Adenylosuccinate synthetase of Trypanosoma brucei brucei (strain 927/4 GUTat10.1).